The primary structure comprises 339 residues: Endo-beta-N-acetylglucosaminidase F1 (339 aa).

A signal peptide (or 51, or 52) is located at residues 1 to 50; it reads MKKFINQFSASLKNNILVFLAFPFVWTSCARDNPLSSENSNISPNAAARA. One can recognise a GH18 domain in the interval 60–326; it reads IKLFSFTEVN…KLIAKELYGD (267 aa). Glu182 functions as the Proton donor in the catalytic mechanism. Residue Trp339 is a propeptide, removed in mature form.

It belongs to the glycosyl hydrolase 18 family. Monomer.

The protein localises to the secreted. It carries out the reaction an N(4)-(oligosaccharide-(1-&gt;3)-[oligosaccharide-(1-&gt;6)]-beta-D-Man-(1-&gt;4)-beta-D-GlcNAc-(1-&gt;4)-alpha-D-GlcNAc)-L-asparaginyl-[protein] + H2O = an oligosaccharide-(1-&gt;3)-[oligosaccharide-(1-&gt;6)]-beta-D-Man-(1-&gt;4)-D-GlcNAc + N(4)-(N-acetyl-beta-D-glucosaminyl)-L-asparaginyl-[protein]. Its function is as follows. Endohydrolysis of the di-N-acetylchitobiosyl unit in high-mannose glycopeptides and glycoproteins. Does not hydrolyze complex bi- or triantennary glycans. The presence of a core-bound fucose impedes endo F1 hydrolysis. In Elizabethkingia meningoseptica (Chryseobacterium meningosepticum), this protein is Endo-beta-N-acetylglucosaminidase F1 (endOF1).